The primary structure comprises 271 residues: Tryptophan synthase alpha chain (271 aa).

Catalysis depends on proton acceptor residues Glu-56 and Asp-67.

This sequence belongs to the TrpA family. As to quaternary structure, tetramer of two alpha and two beta chains.

The enzyme catalyses (1S,2R)-1-C-(indol-3-yl)glycerol 3-phosphate + L-serine = D-glyceraldehyde 3-phosphate + L-tryptophan + H2O. It functions in the pathway amino-acid biosynthesis; L-tryptophan biosynthesis; L-tryptophan from chorismate: step 5/5. In terms of biological role, the alpha subunit is responsible for the aldol cleavage of indoleglycerol phosphate to indole and glyceraldehyde 3-phosphate. This Mycobacterium intracellulare protein is Tryptophan synthase alpha chain.